The sequence spans 226 residues: UPF0758 protein Daci_1904 (226 aa).

Positions 104-226 (ALASPEAVAR…SLSMAGQGML (123 aa)) constitute an MPN domain. Zn(2+) contacts are provided by His175, His177, and Asp188. The short motif at 175 to 188 (HNHPSGQVQASAAD) is the JAMM motif element.

This sequence belongs to the UPF0758 family.

This chain is UPF0758 protein Daci_1904, found in Delftia acidovorans (strain DSM 14801 / SPH-1).